A 402-amino-acid chain; its full sequence is 8-amino-7-oxononanoate synthase (402 aa).

Arg26 serves as a coordination point for substrate. Pyridoxal 5'-phosphate is bound at residue 114 to 115; that stretch reads GY. His139 lines the substrate pocket. 3 residues coordinate pyridoxal 5'-phosphate: Ser182, His210, and Thr239. Residue Lys242 is modified to N6-(pyridoxal phosphate)lysine. Thr359 is a substrate binding site.

Belongs to the class-II pyridoxal-phosphate-dependent aminotransferase family. BioF subfamily. In terms of assembly, homodimer. The cofactor is pyridoxal 5'-phosphate.

The catalysed reaction is 6-carboxyhexanoyl-[ACP] + L-alanine + H(+) = (8S)-8-amino-7-oxononanoate + holo-[ACP] + CO2. Its pathway is cofactor biosynthesis; biotin biosynthesis. Functionally, catalyzes the decarboxylative condensation of pimeloyl-[acyl-carrier protein] and L-alanine to produce 8-amino-7-oxononanoate (AON), [acyl-carrier protein], and carbon dioxide. The polypeptide is 8-amino-7-oxononanoate synthase (Halorhodospira halophila (strain DSM 244 / SL1) (Ectothiorhodospira halophila (strain DSM 244 / SL1))).